Here is a 408-residue protein sequence, read N- to C-terminus: UDP-N-acetylglucosamine--N-acetylmuramyl-(pentapeptide) pyrophosphoryl-undecaprenol N-acetylglucosamine transferase (408 aa).

The tract at residues 1–20 is disordered; the sequence is MNDTVKKPTGGRGDDPLPAG. UDP-N-acetyl-alpha-D-glucosamine-binding positions include 41–43, N160, R197, S231, and Q327; that span reads TAG.

The protein belongs to the glycosyltransferase 28 family. MurG subfamily.

The protein resides in the cell membrane. It carries out the reaction di-trans,octa-cis-undecaprenyl diphospho-N-acetyl-alpha-D-muramoyl-L-alanyl-D-glutamyl-meso-2,6-diaminopimeloyl-D-alanyl-D-alanine + UDP-N-acetyl-alpha-D-glucosamine = di-trans,octa-cis-undecaprenyl diphospho-[N-acetyl-alpha-D-glucosaminyl-(1-&gt;4)]-N-acetyl-alpha-D-muramoyl-L-alanyl-D-glutamyl-meso-2,6-diaminopimeloyl-D-alanyl-D-alanine + UDP + H(+). It functions in the pathway cell wall biogenesis; peptidoglycan biosynthesis. Cell wall formation. Catalyzes the transfer of a GlcNAc subunit on undecaprenyl-pyrophosphoryl-MurNAc-pentapeptide (lipid intermediate I) to form undecaprenyl-pyrophosphoryl-MurNAc-(pentapeptide)GlcNAc (lipid intermediate II). The protein is UDP-N-acetylglucosamine--N-acetylmuramyl-(pentapeptide) pyrophosphoryl-undecaprenol N-acetylglucosamine transferase of Mycolicibacterium paratuberculosis (strain ATCC BAA-968 / K-10) (Mycobacterium paratuberculosis).